A 210-amino-acid chain; its full sequence is Glutathione S-transferase P (210 aa).

The GST N-terminal domain maps to proline 2 to glycine 81. Residue tyrosine 4 is modified to Phosphotyrosine; by EGFR. Glutathione contacts are provided by residues tyrosine 8, arginine 14, tryptophan 39, lysine 45, and glutamine 52–leucine 53. The residue at position 62 (threonine 62) is a Phosphothreonine. Glutamine 65–serine 66 is a binding site for glutathione. The 122-residue stretch at aspartate 83–isoleucine 204 folds into the GST C-terminal domain. 2 positions are modified to N6-succinyllysine: lysine 103 and lysine 116. Position 128 is an N6-acetyllysine (lysine 128).

This sequence belongs to the GST superfamily. Pi family. Homodimer. Interacts with CDK5.

It localises to the cytoplasm. The protein resides in the mitochondrion. Its subcellular location is the nucleus. The enzyme catalyses RX + glutathione = an S-substituted glutathione + a halide anion + H(+). It carries out the reaction prostaglandin J2 + glutathione = prostaglandin J2-S-(R)-glutathione. It catalyses the reaction prostaglandin J2 + glutathione = prostaglandin J2-S-(S)-glutathione. The catalysed reaction is prostaglandin A2 + glutathione = prostaglandin A2-S-(S)-glutathione. The enzyme catalyses 11(S)-hydroxy-14(S),15(S)-epoxy-(5Z,8Z,12E)-eicosatrienoate + glutathione = (11S,15S)-dihydroxy-14(R)-S-glutathionyl-(5Z,8Z,12E)-eicosatrienoate. Functionally, conjugation of reduced glutathione to a wide number of exogenous and endogenous hydrophobic electrophiles. Involved in the formation of glutathione conjugates of both prostaglandin A2 (PGA2) and prostaglandin J2 (PGJ2). Participates in the formation of novel hepoxilin regioisomers. Negatively regulates CDK5 activity via p25/p35 translocation to prevent neurodegeneration. The chain is Glutathione S-transferase P (GSTP1) from Bos taurus (Bovine).